Consider the following 432-residue polypeptide: Glutamate-1-semialdehyde 2,1-aminomutase (432 aa).

Lys-271 is modified (N6-(pyridoxal phosphate)lysine).

It belongs to the class-III pyridoxal-phosphate-dependent aminotransferase family. HemL subfamily. In terms of assembly, homodimer. Pyridoxal 5'-phosphate is required as a cofactor.

The protein localises to the cytoplasm. The catalysed reaction is (S)-4-amino-5-oxopentanoate = 5-aminolevulinate. The protein operates within porphyrin-containing compound metabolism; protoporphyrin-IX biosynthesis; 5-aminolevulinate from L-glutamyl-tRNA(Glu): step 2/2. The protein is Glutamate-1-semialdehyde 2,1-aminomutase of Protochlamydia amoebophila (strain UWE25).